A 379-amino-acid chain; its full sequence is Homoserine O-succinyltransferase (379 aa).

An AB hydrolase-1 domain is found at 48 to 357; the sequence is NAVLICHALS…SAHGHDAFLM (310 aa). The Nucleophile role is filled by serine 154. A substrate-binding site is contributed by arginine 224. Residues aspartate 319 and histidine 352 contribute to the active site. Aspartate 353 contributes to the substrate binding site.

It belongs to the AB hydrolase superfamily. MetX family. In terms of assembly, homodimer.

It is found in the cytoplasm. It catalyses the reaction L-homoserine + succinyl-CoA = O-succinyl-L-homoserine + CoA. It functions in the pathway amino-acid biosynthesis; L-methionine biosynthesis via de novo pathway; O-succinyl-L-homoserine from L-homoserine: step 1/1. Transfers a succinyl group from succinyl-CoA to L-homoserine, forming succinyl-L-homoserine. The chain is Homoserine O-succinyltransferase from Neisseria meningitidis serogroup B (strain ATCC BAA-335 / MC58).